Consider the following 472-residue polypeptide: Endoplasmic reticulum oxidoreductin-2 (472 aa).

An N-terminal signal peptide occupies residues 1–37 (MAETDVGSVKGKEKGSGKRWILLIGAIAAVLLAVVVA). An N-linked (GlcNAc...) asparagine glycan is attached at N44. Disulfide bonds link C55–C74, C57–C72, C111–C371, C120–C125, C221–C230, and C374–C377. The FAD site is built by R200, T202, and W213. FAD-binding residues include S241 and H244. N-linked (GlcNAc...) asparagine glycosylation is present at N267. FAD contacts are provided by R274 and R281. N364 carries N-linked (GlcNAc...) asparagine glycosylation.

This sequence belongs to the EROs family. May function both as a monomer and a homodimer. The cofactor is FAD. N-glycosylated.

It localises to the endoplasmic reticulum membrane. Functionally, essential oxidoreductase that oxidizes proteins in the endoplasmic reticulum to produce disulfide bonds. Acts by oxidizing directly PDI isomerase through a direct disulfide exchange. Does not act as a direct oxidant of folding substrate, but relies on PDI to transfer oxidizing equivalent. Does not oxidize all PDI related proteins, suggesting that it can discriminate between PDI and related proteins. Its reoxidation probably involves electron transfer to molecular oxygen via FAD. Acts independently of glutathione. May be responsible for a significant proportion of reactive oxygen species (ROS) in the cell, thereby being a source of oxidative stress. This Arabidopsis thaliana (Mouse-ear cress) protein is Endoplasmic reticulum oxidoreductin-2 (AERO2).